The chain runs to 347 residues: Malate dehydrogenase, mitochondrial (347 aa).

A mitochondrion-targeting transit peptide spans 1 to 27 (MKASILRSVRSAVSRSSSSNRLLSRSF). Residues 41–47 (GAAGGIG) and Asp-67 contribute to the NAD(+) site. The substrate site is built by Arg-114 and Arg-120. NAD(+)-binding positions include Asn-127 and 150-152 (ISN). Positions 152 and 186 each coordinate substrate. Residue His-210 is the Proton acceptor of the active site. Met-261 is an NAD(+) binding site.

Belongs to the LDH/MDH superfamily. MDH type 1 family. In terms of assembly, homodimer.

The protein localises to the mitochondrion matrix. The enzyme catalyses (S)-malate + NAD(+) = oxaloacetate + NADH + H(+). The sequence is that of Malate dehydrogenase, mitochondrial (MMDH) from Citrullus lanatus (Watermelon).